Reading from the N-terminus, the 437-residue chain is Phosphomethylpyrimidine synthase (437 aa).

Substrate-binding positions include Asn69, Met98, Tyr127, His163, 185-187 (SRG), 226-229 (DACR), and Glu265. Residue His269 participates in Zn(2+) binding. Tyr292 lines the substrate pocket. Zn(2+) is bound at residue His333. Residues Cys409, Cys412, and Cys416 each coordinate [4Fe-4S] cluster.

This sequence belongs to the ThiC family. It depends on [4Fe-4S] cluster as a cofactor.

It catalyses the reaction 5-amino-1-(5-phospho-beta-D-ribosyl)imidazole + S-adenosyl-L-methionine = 4-amino-2-methyl-5-(phosphooxymethyl)pyrimidine + CO + 5'-deoxyadenosine + formate + L-methionine + 3 H(+). Its pathway is cofactor biosynthesis; thiamine diphosphate biosynthesis. Catalyzes the synthesis of the hydroxymethylpyrimidine phosphate (HMP-P) moiety of thiamine from aminoimidazole ribotide (AIR) in a radical S-adenosyl-L-methionine (SAM)-dependent reaction. The polypeptide is Phosphomethylpyrimidine synthase (Clostridium novyi (strain NT)).